We begin with the raw amino-acid sequence, 63 residues long: UPF0370 protein PC1_1167 (63 aa).

A helical transmembrane segment spans residues 3–23; it reads WLADYWWIILIILIGMLINGI. The tract at residues 37-63 is disordered; that stretch reads NKPKLPPHRDNNDKWDDEDDDWPKKKP.

This sequence belongs to the UPF0370 family.

The protein localises to the cell membrane. The polypeptide is UPF0370 protein PC1_1167 (Pectobacterium carotovorum subsp. carotovorum (strain PC1)).